The primary structure comprises 337 residues: m7GpppX diphosphatase (337 aa).

The disordered stretch occupies residues methionine 1–glycine 35. Alanine 2 bears the N-acetylalanine mark. A nuclear localization signal (NLS) motif is present at residues lysine 10–arginine 13. Basic and acidic residues predominate over residues arginine 13–alanine 30. 2 positions are modified to phosphoserine: serine 24 and serine 101. N6-acetyllysine is present on residues lysine 138 and lysine 142. The nuclear export sequence (NES) signature appears at lysine 142–threonine 154. Substrate-binding positions include tryptophan 175, glutamate 185, aspartate 205, lysine 207, and histidine 268 to histidine 279. Residues histidine 275–histidine 279 carry the Histidine triad motif motif. Histidine 277 acts as the Nucleophile in catalysis.

The protein belongs to the HIT family. As to quaternary structure, homodimer. Associates with components of the exosome multienzyme ribonuclease complex, such as EXOSC3 and EXOSC4. Interacts with NDOR1. Detected in liver, brain, kidney, testis and prostate.

The protein resides in the cytoplasm. It localises to the nucleus. It carries out the reaction a 5'-end (N(7)-methyl 5'-triphosphoguanosine)-ribonucleoside in mRNA + H2O = N(7)-methyl-GMP + a 5'-end diphospho-ribonucleoside in mRNA + 2 H(+). Its activity is regulated as follows. The hydrolytic product 7-methylguanosine diphosphate (m7GDP) efficiently inhibits the decapping scavenger activity and acts as a competitive inhibitor in vitro. Inhibited by 2,4-diaminoquinazoline. Its function is as follows. Decapping scavenger enzyme that catalyzes the cleavage of a residual cap structure following the degradation of mRNAs by the 3'-&gt;5' exosome-mediated mRNA decay pathway. Hydrolyzes cap analog structures like 7-methylguanosine nucleoside triphosphate (m7GpppG) with up to 10 nucleotide substrates (small capped oligoribonucleotides) and specifically releases 5'-phosphorylated RNA fragments and 7-methylguanosine monophosphate (m7GMP). Cleaves cap analog structures like tri-methyl guanosine nucleoside triphosphate (m3(2,2,7)GpppG) with very poor efficiency. Does not hydrolyze unmethylated cap analog (GpppG) and shows no decapping activity on intact m7GpppG-capped mRNA molecules longer than 25 nucleotides. Does not hydrolyze 7-methylguanosine diphosphate (m7GDP) to m7GMP. May also play a role in the 5'-&gt;3 mRNA decay pathway; m7GDP, the downstream product released by the 5'-&gt;3' mRNA mediated decapping activity, may be also converted by DCPS to m7GMP. Binds to m7GpppG and strongly to m7GDP. Plays a role in first intron splicing of pre-mRNAs. Inhibits activation-induced cell death. The protein is m7GpppX diphosphatase (DCPS) of Homo sapiens (Human).